The primary structure comprises 138 residues: U1 small nuclear ribonucleoprotein C (138 aa).

Residues 4-36 (YYCDYCDTFLTHDSPSVRKTHNNGRKHKENVRF) form a Matrin-type zinc finger. Residues 58–138 (QSKPNSQMPP…MGRPPMSLRS (81 aa)) are disordered. Residues 67 to 109 (PNAPPGLMPPPGMLPPPGGMPPGRMPPQGLPFPPPGPIPPPPG) are compositionally biased toward pro residues. Residues 113–138 (MRPPHGQMHMGGPRPQMGRPPMSLRS) show a composition bias toward low complexity.

It belongs to the U1 small nuclear ribonucleoprotein C family. U1 snRNP is composed of the 7 core Sm proteins B/B', D1, D2, D3, E, F and G that assemble in a heptameric protein ring on the Sm site of the small nuclear RNA to form the core snRNP, and at least 3 U1 snRNP-specific proteins U1-70K, U1-A and U1-C. U1-C interacts with U1 snRNA and the 5' splice-site region of the pre-mRNA.

It is found in the nucleus. Its function is as follows. Component of the spliceosomal U1 snRNP, which is essential for recognition of the pre-mRNA 5' splice-site and the subsequent assembly of the spliceosome. U1-C is directly involved in initial 5' splice-site recognition for both constitutive and regulated alternative splicing. The interaction with the 5' splice-site seems to precede base-pairing between the pre-mRNA and the U1 snRNA. Stimulates commitment or early (E) complex formation by stabilizing the base pairing of the 5' end of the U1 snRNA and the 5' splice-site region. The sequence is that of U1 small nuclear ribonucleoprotein C from Nematostella vectensis (Starlet sea anemone).